A 405-amino-acid chain; its full sequence is Tyrosine--tRNA ligase (405 aa).

Position 35 (Tyr35) interacts with L-tyrosine. Positions 40 to 49 match the 'HIGH' region motif; sequence ATSSSLHIGH. Tyr166 and Gln170 together coordinate L-tyrosine. Residues 226 to 230 carry the 'KMSKS' region motif; it reads KMGKS. Lys229 contacts ATP. One can recognise an S4 RNA-binding domain in the interval 340–404; that stretch reads VLLINLMLDS…VGKKKFLRIV (65 aa).

It belongs to the class-I aminoacyl-tRNA synthetase family. TyrS type 1 subfamily. In terms of assembly, homodimer.

The protein localises to the cytoplasm. The enzyme catalyses tRNA(Tyr) + L-tyrosine + ATP = L-tyrosyl-tRNA(Tyr) + AMP + diphosphate + H(+). Its function is as follows. Catalyzes the attachment of tyrosine to tRNA(Tyr) in a two-step reaction: tyrosine is first activated by ATP to form Tyr-AMP and then transferred to the acceptor end of tRNA(Tyr). This chain is Tyrosine--tRNA ligase, found in Borreliella afzelii (strain PKo) (Borrelia afzelii).